The primary structure comprises 401 residues: 8-amino-7-oxononanoate synthase (401 aa).

Residue Arg-24 participates in substrate binding. 111–112 (GF) contributes to the pyridoxal 5'-phosphate binding site. His-137 provides a ligand contact to substrate. Residues Ser-183, His-211, and Thr-240 each contribute to the pyridoxal 5'-phosphate site. N6-(pyridoxal phosphate)lysine is present on Lys-243. Residue Thr-357 coordinates substrate.

The protein belongs to the class-II pyridoxal-phosphate-dependent aminotransferase family. BioF subfamily. In terms of assembly, homodimer. The cofactor is pyridoxal 5'-phosphate.

The catalysed reaction is 6-carboxyhexanoyl-[ACP] + L-alanine + H(+) = (8S)-8-amino-7-oxononanoate + holo-[ACP] + CO2. It functions in the pathway cofactor biosynthesis; biotin biosynthesis. In terms of biological role, catalyzes the decarboxylative condensation of pimeloyl-[acyl-carrier protein] and L-alanine to produce 8-amino-7-oxononanoate (AON), [acyl-carrier protein], and carbon dioxide. This Xanthomonas euvesicatoria pv. vesicatoria (strain 85-10) (Xanthomonas campestris pv. vesicatoria) protein is 8-amino-7-oxononanoate synthase.